A 336-amino-acid chain; its full sequence is MDFDAVLLLSFGGPEGPEQVRPFLENVTRGRGVPPERLDHVAEHYLHFGGVSPINGINRALIEQLRAAQALPVYFGNRNWEPYVEDTVKVMRDNGIRRAAVFTTSAWSGYSSCTQYVEDIARARAAAGPGAPELVKLRPYFDHPLFVEMFAGAIADAAAKVPAGARLVFTAHSVPVAADERVGPRLYSRQVAYAARLVAAAAGYAEHDLVWQSRSGPPQVRWLEPDVADHLRALAESGTPAVIVCPIGFVADHIEVVWDLDEELRAQAESAGMLMARASTPNAQPRFARLAADLIDELRCGRTPARVTGPDPVPGCLASVNGAPCRPPHCAAQATG.

Ser52 and Tyr116 together coordinate Fe-coproporphyrin III. Residues His172 and Glu255 each coordinate Fe(2+).

It belongs to the ferrochelatase family.

Its subcellular location is the cytoplasm. The enzyme catalyses Fe-coproporphyrin III + 2 H(+) = coproporphyrin III + Fe(2+). It participates in porphyrin-containing compound metabolism; protoheme biosynthesis. Functionally, involved in coproporphyrin-dependent heme b biosynthesis. Catalyzes the insertion of ferrous iron into coproporphyrin III to form Fe-coproporphyrin III. The polypeptide is Coproporphyrin III ferrochelatase (Mycobacterium avium (strain 104)).